Reading from the N-terminus, the 202-residue chain is Glycerol-3-phosphate acyltransferase (202 aa).

6 helical membrane passes run 2-22 (MIVLMLLLAYIVGSFPSGVII), 54-74 (FVVTFLDIFKGFIVVFFPLLF), 85-105 (FFTNGLIVGVFAILGHVYPIF), 118-138 (AGVVLGVAPILLLILAAIFFL), 140-160 (LYLTKYVSLSSIVAAICCVIG), and 162-182 (LIIHDYILLVVSIIVAILLIF).

This sequence belongs to the PlsY family. Probably interacts with PlsX.

The protein resides in the cell membrane. It carries out the reaction an acyl phosphate + sn-glycerol 3-phosphate = a 1-acyl-sn-glycero-3-phosphate + phosphate. It participates in lipid metabolism; phospholipid metabolism. Functionally, catalyzes the transfer of an acyl group from acyl-phosphate (acyl-PO(4)) to glycerol-3-phosphate (G3P) to form lysophosphatidic acid (LPA). This enzyme utilizes acyl-phosphate as fatty acyl donor, but not acyl-CoA or acyl-ACP. The chain is Glycerol-3-phosphate acyltransferase from Staphylococcus carnosus (strain TM300).